Here is a 223-residue protein sequence, read N- to C-terminus: Holliday junction branch migration complex subunit RuvA (223 aa).

A domain I region spans residues 1–64 (MIGRIAGVIL…EDLLQLFGFP (64 aa)). The domain II stretch occupies residues 65 to 143 (TLLEKEWHRL…AVMALGGALT (79 aa)). The flexible linker stretch occupies residues 144–169 (VDPGPLPEVELVEAAVPAPVPAKAAP). The interval 170–223 (SSAQATADALSALGNLGYAPSEAASAVAEAAAREPAAPTAALIRAALRLLAPKE) is domain III.

The protein belongs to the RuvA family. Homotetramer. Forms an RuvA(8)-RuvB(12)-Holliday junction (HJ) complex. HJ DNA is sandwiched between 2 RuvA tetramers; dsDNA enters through RuvA and exits via RuvB. An RuvB hexamer assembles on each DNA strand where it exits the tetramer. Each RuvB hexamer is contacted by two RuvA subunits (via domain III) on 2 adjacent RuvB subunits; this complex drives branch migration. In the full resolvosome a probable DNA-RuvA(4)-RuvB(12)-RuvC(2) complex forms which resolves the HJ.

The protein resides in the cytoplasm. In terms of biological role, the RuvA-RuvB-RuvC complex processes Holliday junction (HJ) DNA during genetic recombination and DNA repair, while the RuvA-RuvB complex plays an important role in the rescue of blocked DNA replication forks via replication fork reversal (RFR). RuvA specifically binds to HJ cruciform DNA, conferring on it an open structure. The RuvB hexamer acts as an ATP-dependent pump, pulling dsDNA into and through the RuvAB complex. HJ branch migration allows RuvC to scan DNA until it finds its consensus sequence, where it cleaves and resolves the cruciform DNA. In Paracoccus denitrificans (strain Pd 1222), this protein is Holliday junction branch migration complex subunit RuvA.